A 168-amino-acid chain; its full sequence is MTTDSASNGNGSAQQPSPSLNILAQYVKDLSFENPGAPRSLQARDRSPAININVNVNANPLAENDFDVVLSLSAQAKDGDKMLFNVELAYGGVFRVAGFPQEHMLPLLFIECPRLLFPFARQIVADATRNGGFPPLMIDPIDFAQMFAQRMAEEKVRAQVANTNDTAN.

Belongs to the SecB family. Homotetramer, a dimer of dimers. One homotetramer interacts with 1 SecA dimer.

It is found in the cytoplasm. One of the proteins required for the normal export of preproteins out of the cell cytoplasm. It is a molecular chaperone that binds to a subset of precursor proteins, maintaining them in a translocation-competent state. It also specifically binds to its receptor SecA. In Sinorhizobium medicae (strain WSM419) (Ensifer medicae), this protein is Protein-export protein SecB.